We begin with the raw amino-acid sequence, 421 residues long: Extracellular signal-regulated kinase 1 (421 aa).

Residues 70–375 (YQILEIVGEG…VEDALKHPYL (306 aa)) enclose the Protein kinase domain. ATP-binding positions include 76-84 (VGEGAYGIV) and Lys-99. The active-site Proton acceptor is Asp-194. Thr-230 is modified (phosphothreonine). Positions 230-232 (TEY) match the TXY motif. The residue at position 232 (Tyr-232) is a Phosphotyrosine.

This sequence belongs to the protein kinase superfamily. CMGC Ser/Thr protein kinase family. MAP kinase subfamily. The cofactor is Mg(2+). Post-translationally, dually phosphorylated on Thr-230 and Tyr-232, which activates the enzyme.

It catalyses the reaction L-seryl-[protein] + ATP = O-phospho-L-seryl-[protein] + ADP + H(+). It carries out the reaction L-threonyl-[protein] + ATP = O-phospho-L-threonyl-[protein] + ADP + H(+). Its activity is regulated as follows. Activated by tyrosine and threonine phosphorylation. This is Extracellular signal-regulated kinase 1 (CEK1) from Candida albicans (strain SC5314 / ATCC MYA-2876) (Yeast).